The sequence spans 25 residues: Caerin-1.9 (25 aa).

The residue at position 25 (Leu25) is a Leucine amide.

This sequence belongs to the frog skin active peptide (FSAP) family. Caerin subfamily. As to expression, expressed by the skin dorsal glands.

Its subcellular location is the secreted. Antimicrobial peptide. Adopts an alpha helical conformation which can disrupt bacterial membranes. Strongly inhibits the formation of NO by neuronal nitric oxide synthase (nNOS) at micromolar concentrations. Acts by a non-competitive mechanism, probably by binding to calcium/calmodulin and as a consequence blocking calmodulin attachment to nNOS. The protein is Caerin-1.9 of Ranoidea chloris (Red-eyed tree frog).